The primary structure comprises 334 residues: Ketol-acid reductoisomerase (NADP(+)) (334 aa).

One can recognise a KARI N-terminal Rossmann domain in the interval 1-181 (MNIYYDKNAD…GGGRTGILET (181 aa)). Residues 24–27 (YGSQ), Arg-47, Ser-50, Ser-52, and 82–85 (DEFQ) each bind NADP(+). Residue His-107 is part of the active site. Gly-133 lines the NADP(+) pocket. Positions 182 to 323 (SFKDETETDL…ESLRSMMPWI (142 aa)) constitute a KARI C-terminal knotted domain. 4 residues coordinate Mg(2+): Asp-190, Glu-194, Glu-226, and Glu-230. Ser-251 is a substrate binding site.

Belongs to the ketol-acid reductoisomerase family. Mg(2+) serves as cofactor.

It catalyses the reaction (2R)-2,3-dihydroxy-3-methylbutanoate + NADP(+) = (2S)-2-acetolactate + NADPH + H(+). The catalysed reaction is (2R,3R)-2,3-dihydroxy-3-methylpentanoate + NADP(+) = (S)-2-ethyl-2-hydroxy-3-oxobutanoate + NADPH + H(+). Its pathway is amino-acid biosynthesis; L-isoleucine biosynthesis; L-isoleucine from 2-oxobutanoate: step 2/4. It participates in amino-acid biosynthesis; L-valine biosynthesis; L-valine from pyruvate: step 2/4. Involved in the biosynthesis of branched-chain amino acids (BCAA). Catalyzes an alkyl-migration followed by a ketol-acid reduction of (S)-2-acetolactate (S2AL) to yield (R)-2,3-dihydroxy-isovalerate. In the isomerase reaction, S2AL is rearranged via a Mg-dependent methyl migration to produce 3-hydroxy-3-methyl-2-ketobutyrate (HMKB). In the reductase reaction, this 2-ketoacid undergoes a metal-dependent reduction by NADPH to yield (R)-2,3-dihydroxy-isovalerate. This chain is Ketol-acid reductoisomerase (NADP(+)), found in Vesicomyosocius okutanii subsp. Calyptogena okutanii (strain HA).